The sequence spans 833 residues: Major vault protein (833 aa).

MVP repeat units follow at residues 54–118, 119–170, 171–223, 224–278, 280–328, 329–380, and 381–433; these read RHYC…QLIP, PNTG…TVIY, PNTA…TMLS, DLKA…VSLS, KEYV…LVVG, KEEA…MALD, and KNEG…SIQT.

As to quaternary structure, the vault ribonucleoprotein particle is a huge (400 A x 670 A) cage structure of 12.9 MDa. It consists of a dimer of half-vaults, with each half-vault comprising 39 identical major vault protein (MVP) chains, PARP4 and one or more vault RNAs (vRNAs).

Its subcellular location is the cytoplasm. The protein resides in the nucleus. Functionally, required for normal vault structure. Vaults are multi-subunit structures that may act as scaffolds for proteins involved in signal transduction. Vaults may also play a role in nucleo-cytoplasmic transport. The chain is Major vault protein from Leishmania infantum.